The primary structure comprises 114 residues: Pole-localizer protein TmaR (114 aa).

A coiled-coil region spans residues 70 to 111 (RDDYESRVDDYTIRNAELSKQRREASTKMKEQKKAHAELLKN). The segment at 89-114 (KQRREASTKMKEQKKAHAELLKNAEK) is disordered.

This sequence belongs to the pole-localizer TmaR family.

The protein resides in the cytoplasm. Its function is as follows. Pole-localizer protein involved in the regulation of several cellular processes. The chain is Pole-localizer protein TmaR from Haemophilus influenzae (strain PittEE).